The following is a 669-amino-acid chain: MIGTSSGTSHNRSRKKKEQCGSCPNRFSKDKRQVAAEDSDTTEVESSTDEEERWKEVARAAEIPADYYNIQKLVKYIKAGNQTATIVSLCCLKDYDLSTQINQFAISDIGGLDVLVNILECSDTKCCLGALKVLSDITLNIDIRKTIVDLDGIPLIVDILNSSMKDLKTMAAETLANVCKVRLARKYVRTCGGIPKLVDLIDIKLSILKTPRDQLSPDDLESLDMTRAGARALFTLADSKHNMEQMRKSGIVPLMAQLLKSCHIDVVIPIMGTVRKCSSEPKFQLAITTEGMIPDIVSHLSSENTELKMEGSTAIYKCAFDGTTRDLVREAGGLEPLVTIIKDKNVRENKPLLRGATGAIWMCAVTDANVKVLDQLRTVNHLVALLNDECDEVLTNVTGAISECVRFQSNREQLRQAGGLPAMVSLLNSSHAPLLENLAKGLKECAEDPDSMRILEDLDAVRLIWSLLKNPTTRVQAHAAYAICPCVRNANDSAELVRSLVGAMELVVGLLKSKDIMVLSAVCAAIATIAQDQTNLAILTDLKVIYKLADLVQTTDDLLRMNLAAAVAACACFGNNTEELGRLRTVTPIVTYMTSDNPLVHRSTAMALEKLSMDPQNCITMHQSGVVPFLLECIGSTNKELQLAAAGCLRNIRELALRAEEYLLKIDDD.

Positions 1–10 are enriched in polar residues; that stretch reads MIGTSSGTSH. Residues 1–53 form a disordered region; it reads MIGTSSGTSHNRSRKKKEQCGSCPNRFSKDKRQVAAEDSDTTEVESSTDEEER. A compositionally biased stretch (acidic residues) spans 37-51; that stretch reads EDSDTTEVESSTDEE. ARM repeat units lie at residues 100–139, 141–180, 240–279, 281–320, 322–365, 367–406, 408–447, 492–531, 574–613, and 615–654; these read QINQ…DITL, IDIR…NVCK, KHNM…KCSS, PKFQ…KCAF, GTTR…MCAV, DANV…ECVR, QSNR…ECAE, DSAE…TIAQ, GNNT…KLSM, and PQNC…NIRE.

As to expression, highly expressed in testis.

Its function is as follows. Important for spermatogenesis where it may have a role in sperm individualization. This is Armadillo repeat-containing protein gudu from Drosophila melanogaster (Fruit fly).